We begin with the raw amino-acid sequence, 628 residues long: Somatic embryogenesis receptor kinase 2 (628 aa).

The first 29 residues, 1–29 (MGRKKFEAFGFVCLISLLLLFNSLWLASS), serve as a signal peptide directing secretion. Residues 30–241 (NMEGDALHSL…PTPGGYSATG (212 aa)) are Extracellular-facing. Residues 45-85 (DPNNVLQSWDPTLVNPCTWFHVTCNNENSVIRVDLGNADLS) are PSKR1 binding. The interval 56–58 (TLV) is CLE44 binding. A disulfide bond links Cys61 and Cys68. Leucine-rich repeat receptor-like protein kinase binding regions lie at residues 62-81 (TWFH…DLGN) and 100-105 (YLELYS). Position 64–65 (64–65 (FH)) interacts with brassinolide. 4 LRR repeats span residues 95 to 119 (LKNL…LGNL), 121 to 143 (NLVS…LGKL), 144 to 167 (FKLR…LTNI), and 168 to 192 (MTLQ…SFSL). Asn107 and Asn118 each carry an N-linked (GlcNAc...) asparagine glycan. Leucine-rich repeat receptor-like protein kinase binding stretches follow at residues 126 to 129 (DLYL) and 148 to 150 (FLR). N-linked (GlcNAc...) asparagine glycosylation is found at Asn153 and Asn187. The leucine-rich repeat receptor-like protein kinase binding stretch occupies residues 174-197 (DLSNNRLSGSVPDNGSFSLFTPIS). A disulfide bridge connects residues Cys205 and Cys213. Residues 242-262 (AIAGGVAAGAALLFAAPALAF) traverse the membrane as a helical segment. Residues 263-628 (AWWRRRKPQE…LHAMELSGPR (366 aa)) are Cytoplasmic-facing. Thr302 is subject to Phosphothreonine. Residues 305-592 (FSNKNILGRG…GLAEKWDEWQ (288 aa)) enclose the Protein kinase domain. 311 to 319 (LGRGGFGKV) is a binding site for ATP. At Thr328 the chain carries Phosphothreonine. ATP is bound at residue Lys333. Phosphoserine is present on residues Ser386 and Ser389. The active-site Proton acceptor is the Asp432. Phosphothreonine is present on residues Thr462, Thr465, Thr466, and Thr471. Tyr479 is modified (phosphotyrosine). A Phosphoserine modification is found at Ser481. Residue Thr482 is modified to Phosphothreonine. Ser486 bears the Phosphoserine mark. Phosphothreonine is present on Thr562. Ser604 carries the post-translational modification Phosphoserine. Thr616 bears the Phosphothreonine mark. Ser625 carries the phosphoserine modification.

This sequence belongs to the protein kinase superfamily. Ser/Thr protein kinase family. In terms of assembly, homo- and heterodimer. Component of the SERK1 signaling complex, composed of KAPP, CDC48A, GRF6 or GRF7, SERK1, SERK2, SERK3/BAK1 and BRI1. Bind to BRI1 in a brassinolide-dependent manner. Heterodimer with PSKR1. Interacts with the EF-Tu receptor EFR and FLS2 in a specific ligand-induced manner. Interacts with ERECTA in a EPF2-induced manner. Interacts with ERL1 in a EPF1-induced manner. Interacts with TMM. In the presence of the signal peptide RGF1, interacts with RGI3/RGFR1 and RGI4/RGFR2/SKM2. Binds to the peptide CLE44 in the presence of TDR. Autophosphorylated. As to expression, expressed in flowers, tapetum, developing microspores, all cells of the embryo sac, provascular strands and developing vascular bundles. Low expression in adult vascular tissue.

It is found in the cell membrane. The catalysed reaction is L-seryl-[protein] + ATP = O-phospho-L-seryl-[protein] + ADP + H(+). The enzyme catalyses L-threonyl-[protein] + ATP = O-phospho-L-threonyl-[protein] + ADP + H(+). Functionally, serine/threonine-kinase involved in brassinosteroid-dependent and -independent signaling pathways. Acts redundantly with SERK1 as a control point for sporophytic development controlling male gametophyte production. Serves as coreceptor to small peptide (e.g. RGF1 and CLE44) signaling. Involved in the perception of phytosulfokine and subsequent signal transduction. This Arabidopsis thaliana (Mouse-ear cress) protein is Somatic embryogenesis receptor kinase 2.